The following is a 245-amino-acid chain: MNVILLIPARYGSSRFPGKPLAPINGKPMIQHVYERASLAKGLTNIYVATDDERIKATVEGFGGKVVMTSPDAASGTDRINEAIKLLGLKDDDLVINVQGDQPLIDPTAIEQLINLFERQPGEFEMATLGYEIVNKADIDDPMQVKMVFDNNYYALYFSRSRIPFGRDTQDYPVFKHLGIYAYTSKFVQTFAALPLGRLEDLEKLEQLRALEHGHKIKIAISASNSLEVDRPEDIHKCEQRLAAG.

Belongs to the KdsB family.

It localises to the cytoplasm. It catalyses the reaction 8-amino-3,8-dideoxy-alpha-D-manno-octulosonate + CTP = CMP-8-amino-3,8-dideoxy-alpha-D-manno-oct-2-ulosonate + diphosphate. It functions in the pathway bacterial outer membrane biogenesis; lipopolysaccharide biosynthesis. Functionally, activates KDO8N (a required 8-carbon sugar) for incorporation into bacterial lipopolysaccharide in the Shewanella genus. The chain is 8-amino-3,8-dideoxy-manno-octulosonate cytidylyltransferase from Shewanella sp. (strain W3-18-1).